Here is a 95-residue protein sequence, read N- to C-terminus: Histone-like DNA-binding protein (95 aa).

This sequence belongs to the bacterial histone-like protein family.

This chain is Histone-like DNA-binding protein, found in Rickettsia conorii (strain ATCC VR-613 / Malish 7).